Here is a 269-residue protein sequence, read N- to C-terminus: Cytochrome c oxidase subunit 3 (269 aa).

7 helical membrane-spanning segments follow: residues 21–41, 49–69, 90–110, 132–152, 167–187, 205–225, and 247–267; these read PWPM…GLTA, MFML…FKDI, GFLM…WAFL, ISAA…GVTM, TLYG…FQGL, FFAL…MLAM, and ILYL…VYWW.

This sequence belongs to the cytochrome c oxidase subunit 3 family. As to quaternary structure, component of the cytochrome c oxidase (complex IV, CIV), a multisubunit enzyme composed of a catalytic core of 3 subunits and several supernumerary subunits. The complex exists as a monomer or a dimer and forms supercomplexes (SCs) in the inner mitochondrial membrane with ubiquinol-cytochrome c oxidoreductase (cytochrome b-c1 complex, complex III, CIII).

It localises to the mitochondrion inner membrane. The catalysed reaction is 4 Fe(II)-[cytochrome c] + O2 + 8 H(+)(in) = 4 Fe(III)-[cytochrome c] + 2 H2O + 4 H(+)(out). Functionally, component of the cytochrome c oxidase, the last enzyme in the mitochondrial electron transport chain which drives oxidative phosphorylation. The respiratory chain contains 3 multisubunit complexes succinate dehydrogenase (complex II, CII), ubiquinol-cytochrome c oxidoreductase (cytochrome b-c1 complex, complex III, CIII) and cytochrome c oxidase (complex IV, CIV), that cooperate to transfer electrons derived from NADH and succinate to molecular oxygen, creating an electrochemical gradient over the inner membrane that drives transmembrane transport and the ATP synthase. Cytochrome c oxidase is the component of the respiratory chain that catalyzes the reduction of oxygen to water. Electrons originating from reduced cytochrome c in the intermembrane space (IMS) are transferred via the dinuclear copper A center (CU(A)) of subunit 2 and heme A of subunit 1 to the active site in subunit 1, a binuclear center (BNC) formed by heme A3 and copper B (CU(B)). The BNC reduces molecular oxygen to 2 water molecules using 4 electrons from cytochrome c in the IMS and 4 protons from the mitochondrial matrix. The sequence is that of Cytochrome c oxidase subunit 3 (COX3) from Debaryomyces hansenii (strain ATCC 36239 / CBS 767 / BCRC 21394 / JCM 1990 / NBRC 0083 / IGC 2968) (Yeast).